The primary structure comprises 305 residues: MARHFLSLHDYTKEELDRLLALAIELKQEQKQGGEHHLLKGKTLAMIFDKSSTRTRISFEVGIYQLGGHGLFISTGTSQMGRGEPLKDTARVLSRYCDGIMIRTFGQEIVDELAAYATVPVINGLTDLFHPCQIMADVMTVMEHKGGYAGLKFAWVGDGNNMANTWIEAAAIFGFDLALACPQGYEPDAKVMAWAAERAPGRVTLTADPKEAVSGAHVINTDVWASMGMEAEQKVREQAFGGFCLDDALAGLAHPDHIVLHCLPAHRGEEISDSVIEGSNSRVWDEAENRLHAQKAIMATLMGGE.

Residues 52-55 (STRT), glutamine 79, arginine 103, and 130-133 (HPCQ) contribute to the carbamoyl phosphate site. Residues asparagine 161, aspartate 222, and 226–227 (SM) contribute to the L-ornithine site. Carbamoyl phosphate-binding positions include 262-263 (CL) and arginine 290.

The protein belongs to the aspartate/ornithine carbamoyltransferase superfamily. OTCase family.

It localises to the cytoplasm. The enzyme catalyses carbamoyl phosphate + L-ornithine = L-citrulline + phosphate + H(+). It participates in amino-acid biosynthesis; L-arginine biosynthesis; L-arginine from L-ornithine and carbamoyl phosphate: step 1/3. Its function is as follows. Reversibly catalyzes the transfer of the carbamoyl group from carbamoyl phosphate (CP) to the N(epsilon) atom of ornithine (ORN) to produce L-citrulline. This is Ornithine carbamoyltransferase from Pelobacter propionicus (strain DSM 2379 / NBRC 103807 / OttBd1).